A 332-amino-acid chain; its full sequence is Ketol-acid reductoisomerase (NADP(+)) (332 aa).

Residues 2 to 182 (ANIYYDEDAS…GATRAGLIET (181 aa)) enclose the KARI N-terminal Rossmann domain. Residues 25 to 28 (YGSQ), S51, S53, and 83 to 86 (DTVQ) contribute to the NADP(+) site. H108 is an active-site residue. G134 is a binding site for NADP(+). One can recognise a KARI C-terminal knotted domain in the interval 183-327 (TFKEETETDL…KELRKMMPWL (145 aa)). D191, E195, E227, and E231 together coordinate Mg(2+). Substrate is bound at residue S252.

This sequence belongs to the ketol-acid reductoisomerase family. The cofactor is Mg(2+).

The enzyme catalyses (2R)-2,3-dihydroxy-3-methylbutanoate + NADP(+) = (2S)-2-acetolactate + NADPH + H(+). It catalyses the reaction (2R,3R)-2,3-dihydroxy-3-methylpentanoate + NADP(+) = (S)-2-ethyl-2-hydroxy-3-oxobutanoate + NADPH + H(+). The protein operates within amino-acid biosynthesis; L-isoleucine biosynthesis; L-isoleucine from 2-oxobutanoate: step 2/4. Its pathway is amino-acid biosynthesis; L-valine biosynthesis; L-valine from pyruvate: step 2/4. Functionally, involved in the biosynthesis of branched-chain amino acids (BCAA). Catalyzes an alkyl-migration followed by a ketol-acid reduction of (S)-2-acetolactate (S2AL) to yield (R)-2,3-dihydroxy-isovalerate. In the isomerase reaction, S2AL is rearranged via a Mg-dependent methyl migration to produce 3-hydroxy-3-methyl-2-ketobutyrate (HMKB). In the reductase reaction, this 2-ketoacid undergoes a metal-dependent reduction by NADPH to yield (R)-2,3-dihydroxy-isovalerate. This is Ketol-acid reductoisomerase (NADP(+)) from Sulfurihydrogenibium sp. (strain YO3AOP1).